We begin with the raw amino-acid sequence, 61 residues long: Small ribosomal subunit protein uS14B (61 aa).

Positions 24, 27, 40, and 43 each coordinate Zn(2+).

This sequence belongs to the universal ribosomal protein uS14 family. Zinc-binding uS14 subfamily. In terms of assembly, part of the 30S ribosomal subunit. Contacts proteins S3 and S10. It depends on Zn(2+) as a cofactor.

In terms of biological role, binds 16S rRNA, required for the assembly of 30S particles and may also be responsible for determining the conformation of the 16S rRNA at the A site. This Lactococcus lactis subsp. lactis (strain IL1403) (Streptococcus lactis) protein is Small ribosomal subunit protein uS14B.